We begin with the raw amino-acid sequence, 214 residues long: MTRILKVKPTRMELLRLKRRIKLAEKGHKILKEKQDALIMEFFTIYDEALALRREVNQKIAEAFEQLRLAEIDVGIVKLSEIALSVKSNKEIKIKRRNIMGVPVPLIEAEGFRRDPYERGYAFVSTSPKVDVTAETFEEVLELVTRLAEIEETLKRLAKEIEKTKRRVNALEYIIIPRMAETVKYISQHLDEMERENFFRLKRVKALLEAKAQG.

It belongs to the V-ATPase D subunit family. Has multiple subunits with at least A(3), B(3), C, D, E, F, H, I and proteolipid K(x).

The protein resides in the cell membrane. Component of the A-type ATP synthase that produces ATP from ADP in the presence of a proton gradient across the membrane. In Thermococcus sibiricus (strain DSM 12597 / MM 739), this protein is A-type ATP synthase subunit D.